Reading from the N-terminus, the 510-residue chain is NAD(P)H-quinone oxidoreductase subunit 2 A, chloroplastic (510 aa).

The next 13 membrane-spanning stretches (helical) occupy residues 24 to 44 (LLLF…GLIL), 57 to 77 (IPWL…ALLF), 99 to 119 (IFQF…VEYI), 124 to 144 (MAIT…MFLC), 149 to 169 (LITI…LSGY), 183 to 203 (YLLM…WLYG), 229 to 249 (ISIA…PAPF), 295 to 315 (WHLL…LIAI), 323 to 343 (MLAY…IVGD), 354 to 374 (YMLF…LFGL), 395 to 415 (ALSS…AGFF), 418 to 438 (LYLF…IGLL), and 484 to 504 (MILC…IIAI).

Belongs to the complex I subunit 2 family. In terms of assembly, NDH is composed of at least 16 different subunits, 5 of which are encoded in the nucleus.

It is found in the plastid. Its subcellular location is the chloroplast thylakoid membrane. It carries out the reaction a plastoquinone + NADH + (n+1) H(+)(in) = a plastoquinol + NAD(+) + n H(+)(out). The catalysed reaction is a plastoquinone + NADPH + (n+1) H(+)(in) = a plastoquinol + NADP(+) + n H(+)(out). Functionally, NDH shuttles electrons from NAD(P)H:plastoquinone, via FMN and iron-sulfur (Fe-S) centers, to quinones in the photosynthetic chain and possibly in a chloroplast respiratory chain. The immediate electron acceptor for the enzyme in this species is believed to be plastoquinone. Couples the redox reaction to proton translocation, and thus conserves the redox energy in a proton gradient. The sequence is that of NAD(P)H-quinone oxidoreductase subunit 2 A, chloroplastic from Piper cenocladum (Ant piper).